Here is a 269-residue protein sequence, read N- to C-terminus: Cytochrome c oxidase subunit 3 (269 aa).

A run of 6 helical transmembrane segments spans residues 46–66, 90–110, 138–160, 167–187, 207–227, and 247–267; these read NSYY…AFWF, GVIL…WAFF, PLLN…HSLI, ALYG…FQGV, FGTG…AVAL, and ILYW…IYYW.

This sequence belongs to the cytochrome c oxidase subunit 3 family. As to quaternary structure, component of the cytochrome c oxidase (complex IV, CIV), a multisubunit enzyme composed of a catalytic core of 3 subunits and several supernumerary subunits. The complex exists as a monomer or a dimer and forms supercomplexes (SCs) in the inner mitochondrial membrane with ubiquinol-cytochrome c oxidoreductase (cytochrome b-c1 complex, complex III, CIII).

It is found in the mitochondrion inner membrane. The catalysed reaction is 4 Fe(II)-[cytochrome c] + O2 + 8 H(+)(in) = 4 Fe(III)-[cytochrome c] + 2 H2O + 4 H(+)(out). Its function is as follows. Component of the cytochrome c oxidase, the last enzyme in the mitochondrial electron transport chain which drives oxidative phosphorylation. The respiratory chain contains 3 multisubunit complexes succinate dehydrogenase (complex II, CII), ubiquinol-cytochrome c oxidoreductase (cytochrome b-c1 complex, complex III, CIII) and cytochrome c oxidase (complex IV, CIV), that cooperate to transfer electrons derived from NADH and succinate to molecular oxygen, creating an electrochemical gradient over the inner membrane that drives transmembrane transport and the ATP synthase. Cytochrome c oxidase is the component of the respiratory chain that catalyzes the reduction of oxygen to water. Electrons originating from reduced cytochrome c in the intermembrane space (IMS) are transferred via the dinuclear copper A center (CU(A)) of subunit 2 and heme A of subunit 1 to the active site in subunit 1, a binuclear center (BNC) formed by heme A3 and copper B (CU(B)). The BNC reduces molecular oxygen to 2 water molecules using 4 electrons from cytochrome c in the IMS and 4 protons from the mitochondrial matrix. This Podospora anserina (strain S / ATCC MYA-4624 / DSM 980 / FGSC 10383) (Pleurage anserina) protein is Cytochrome c oxidase subunit 3 (COIII).